Consider the following 558-residue polypeptide: Glutamine--tRNA ligase (558 aa).

Positions 34–44 (PEPNGYLHIGH) match the 'HIGH' region motif. ATP-binding positions include 35–37 (EPN) and 41–47 (HIGHAKS). Positions 67 and 212 each coordinate L-glutamine. ATP is bound by residues T231, 261–262 (RL), and 269–271 (LSK). Residues 268 to 272 (VLSKR) carry the 'KMSKS' region motif.

It belongs to the class-I aminoacyl-tRNA synthetase family. In terms of assembly, monomer.

Its subcellular location is the cytoplasm. The catalysed reaction is tRNA(Gln) + L-glutamine + ATP = L-glutaminyl-tRNA(Gln) + AMP + diphosphate. The polypeptide is Glutamine--tRNA ligase (Pseudoalteromonas atlantica (strain T6c / ATCC BAA-1087)).